The sequence spans 89 residues: Small ribosomal subunit protein uS15 (89 aa).

It belongs to the universal ribosomal protein uS15 family. In terms of assembly, part of the 30S ribosomal subunit. Forms a bridge to the 50S subunit in the 70S ribosome, contacting the 23S rRNA.

Its function is as follows. One of the primary rRNA binding proteins, it binds directly to 16S rRNA where it helps nucleate assembly of the platform of the 30S subunit by binding and bridging several RNA helices of the 16S rRNA. Functionally, forms an intersubunit bridge (bridge B4) with the 23S rRNA of the 50S subunit in the ribosome. This is Small ribosomal subunit protein uS15 from Cellvibrio japonicus (strain Ueda107) (Pseudomonas fluorescens subsp. cellulosa).